An 86-amino-acid chain; its full sequence is MANSKSAKKRAIQAEKRRQHNASRRSMMRTYMKKTVAAIEAGDKEAATAAFAVVTPILDRMATKGLIHKNKAARHKSRFAAQIKAL.

Over residues 1 to 27 the composition is skewed to basic residues; it reads MANSKSAKKRAIQAEKRRQHNASRRSM. Positions 1 to 28 are disordered; the sequence is MANSKSAKKRAIQAEKRRQHNASRRSMM.

This sequence belongs to the bacterial ribosomal protein bS20 family.

Functionally, binds directly to 16S ribosomal RNA. The sequence is that of Small ribosomal subunit protein bS20 from Vibrio parahaemolyticus serotype O3:K6 (strain RIMD 2210633).